A 148-amino-acid chain; its full sequence is uncharacterized protein (148 aa).

Disordered regions lie at residues methionine 1 to proline 86 and arginine 122 to cysteine 148. Basic residues predominate over residues arginine 38–proline 57. Polar residues predominate over residues glutamine 134–cysteine 148.

Belongs to the Epstein-Barr virus BLLF2 family.

This is an uncharacterized protein from Homo sapiens (Human).